The primary structure comprises 1543 residues: DNA-directed RNA polymerase subunit beta' (1543 aa).

Positions 60, 62, 75, and 78 each coordinate Zn(2+). The Mg(2+) site is built by Asp-627, Asp-629, and Asp-631. Residues Cys-1017, Cys-1097, Cys-1104, and Cys-1107 each coordinate Zn(2+). 2 disordered regions span residues 1466 to 1490 and 1522 to 1543; these read PADR…APPR and AEEG…EENV.

Belongs to the RNA polymerase beta' chain family. The RNAP catalytic core consists of 2 alpha, 1 beta, 1 beta' and 1 omega subunit. When a sigma factor is associated with the core the holoenzyme is formed, which can initiate transcription. The cofactor is Mg(2+). Zn(2+) serves as cofactor.

It catalyses the reaction RNA(n) + a ribonucleoside 5'-triphosphate = RNA(n+1) + diphosphate. Functionally, DNA-dependent RNA polymerase catalyzes the transcription of DNA into RNA using the four ribonucleoside triphosphates as substrates. The protein is DNA-directed RNA polymerase subunit beta' of Herpetosiphon aurantiacus (strain ATCC 23779 / DSM 785 / 114-95).